Consider the following 365-residue polypeptide: tRNA/tmRNA (uracil-C(5))-methyltransferase (365 aa).

Residues glutamine 188, tyrosine 216, asparagine 221, glutamate 237, and aspartate 297 each contribute to the S-adenosyl-L-methionine site. Cysteine 322 acts as the Nucleophile in catalysis. The active-site Proton acceptor is glutamate 356.

The protein belongs to the class I-like SAM-binding methyltransferase superfamily. RNA M5U methyltransferase family. TrmA subfamily.

The catalysed reaction is uridine(54) in tRNA + S-adenosyl-L-methionine = 5-methyluridine(54) in tRNA + S-adenosyl-L-homocysteine + H(+). It carries out the reaction uridine(341) in tmRNA + S-adenosyl-L-methionine = 5-methyluridine(341) in tmRNA + S-adenosyl-L-homocysteine + H(+). Its function is as follows. Dual-specificity methyltransferase that catalyzes the formation of 5-methyluridine at position 54 (m5U54) in all tRNAs, and that of position 341 (m5U341) in tmRNA (transfer-mRNA). The polypeptide is tRNA/tmRNA (uracil-C(5))-methyltransferase (Aggregatibacter aphrophilus (strain NJ8700) (Haemophilus aphrophilus)).